The following is a 147-amino-acid chain: Fibromodulin (147 aa).

LRR repeat units lie at residues 1 to 15 (LDHNNLTRMPGPLPR), 16 to 37 (SLRELHLDHNQISRVPNNALEG), 40 to 61 (NLTALYLQHNEIQEVGSSMRGL), 63 to 84 (SLILLDLSYNHLRRVPDGLPSA), 85 to 105 (LEQLYLEHNNVYTVPDSYFRG), and 108 to 128 (KLLYVRLSHNSLTNSGLASNT). Residue N5 is glycosylated (N-linked (GlcNAc...) asparagine). A glycan (N-linked (GlcNAc...) asparagine) is linked at N40. N-linked (GlcNAc...) asparagine glycosylation occurs at N130. One copy of the LRR 7 repeat lies at 133 to 147 (SLLELDLSYNQLQKI).

The protein belongs to the small leucine-rich proteoglycan (SLRP) family. SLRP class II subfamily. As to quaternary structure, binds to type I and type II collagen. Post-translationally, binds keratan sulfate chains. Sulfated on tyrosine residues. In terms of processing, the N-terminus is blocked by a pyrrolidone carboxylic acid generated by post-translational modification of N-terminal glutamine.

Its subcellular location is the secreted. It is found in the extracellular space. It localises to the extracellular matrix. In terms of biological role, affects the rate of fibrils formation. May have a primary role in collagen fibrillogenesis. The sequence is that of Fibromodulin (FMOD) from Oryctolagus cuniculus (Rabbit).